We begin with the raw amino-acid sequence, 159 residues long: Probable chemoreceptor glutamine deamidase CheD 2 (159 aa).

It belongs to the CheD family.

The catalysed reaction is L-glutaminyl-[protein] + H2O = L-glutamyl-[protein] + NH4(+). Probably deamidates glutamine residues to glutamate on methyl-accepting chemotaxis receptors (MCPs), playing an important role in chemotaxis. The chain is Probable chemoreceptor glutamine deamidase CheD 2 from Anaeromyxobacter dehalogenans (strain 2CP-C).